A 220-amino-acid polypeptide reads, in one-letter code: Small ribosomal subunit protein uS3c (220 aa).

One can recognise a KH type-2 domain in the interval 48 to 119; the sequence is VQKHTNNPFH…KLCLILIKID (72 aa).

Belongs to the universal ribosomal protein uS3 family. As to quaternary structure, part of the 30S ribosomal subunit.

It localises to the plastid. The protein resides in the chloroplast. The sequence is that of Small ribosomal subunit protein uS3c (rps3) from Psilotum nudum (Whisk fern).